A 349-amino-acid chain; its full sequence is tRNA pseudouridine synthase D (349 aa).

Phenylalanine 27 is a binding site for substrate. Aspartate 80 acts as the Nucleophile in catalysis. Residue asparagine 129 participates in substrate binding. One can recognise a TRUD domain in the interval 155-303 (GVPNYFGPQR…VEAARRAMLL (149 aa)). A substrate-binding site is contributed by phenylalanine 329.

The protein belongs to the pseudouridine synthase TruD family.

The enzyme catalyses uridine(13) in tRNA = pseudouridine(13) in tRNA. Responsible for synthesis of pseudouridine from uracil-13 in transfer RNAs. This chain is tRNA pseudouridine synthase D, found in Cronobacter sakazakii (strain ATCC BAA-894) (Enterobacter sakazakii).